The sequence spans 138 residues: Methane monooxygenase regulatory protein B (138 aa).

Belongs to the TmoD/XamoD family. As to quaternary structure, the soluble methane monooxygenase (sMMO) consists of four components A/MMOH (composed of alpha/MmoX, beta/MmoY and gamma/MmoZ), B/MMOB (MmoB), C/MMOR (MmoC) and D/MMOD (MmoD).

In terms of biological role, the B protein acts as a regulator of electron flow through the soluble mmo complex, switching the enzyme from an oxidase to a hydroxylase in the presence of the substrate. In Methylosinus trichosporium, this protein is Methane monooxygenase regulatory protein B (mmoB).